A 123-amino-acid chain; its full sequence is MANSVYVKFEVPKEIADKVYEALEIARDTGKIGKGTNEVTKNIERNNVALAVIAEDIEPAEIVAHLPILAEEKEIPYVYLPTKEELGEAAGLNVGTASACIIDAGEGQELVDEIVEKVAELKN.

Belongs to the eukaryotic ribosomal protein eL8 family. Part of the 50S ribosomal subunit. Probably part of the RNase P complex.

It is found in the cytoplasm. Functionally, multifunctional RNA-binding protein that recognizes the K-turn motif in ribosomal RNA, the RNA component of RNase P, box H/ACA, box C/D and box C'/D' sRNAs. This is Large ribosomal subunit protein eL8 from Methanosphaera stadtmanae (strain ATCC 43021 / DSM 3091 / JCM 11832 / MCB-3).